The following is a 150-amino-acid chain: Protein U1 (150 aa).

It belongs to the nanovirus U1 protein family.

The sequence is that of Protein U1 (DNA-U1) from Astragalus sinicus (Chinese milk vetch).